The chain runs to 22 residues: Plasticin-TR (22 aa).

It belongs to the frog skin active peptide (FSAP) family. Plasticin subfamily. Exhibits a propensity to self-association and forms helical oligomers in membrane-mimetic environments. As to expression, expressed by the skin glands.

Its subcellular location is the secreted. It localises to the target cell membrane. Has no antimicrobial activity against Gram-negative bacterium E.coli ATCC 25922, Gram-positive bacterium S.epidermidis ATCC 12228 and against fungus C.albicans ATCC 24433 at concentrations up to 100 uM. Has an anti-inflammatory effect, since it inhibits the production of the pro-inflammatory cytokines TNF-alpha and IL-1 beta. Has high activity of stimulation of insulin release, which may protect the species from being eaten by predators by causing fatal hypoglycemia. Is not cytotoxic to cancer line cells. Does not show hemolysis on mouse erythrocytes. Adopts a mixture of alpha-helical and beta-sheet structures. This is Plasticin-TR from Phyllomedusa trinitatis (Trinidad leaf frog).